The following is a 137-amino-acid chain: uncharacterized protein (137 aa).

This sequence belongs to the DCC thiol-disulfide oxidoreductase family.

This is an uncharacterized protein from Bacillus subtilis (strain 168).